The chain runs to 436 residues: Trigger factor (436 aa).

A PPIase FKBP-type domain is found at 161–248; sequence TDRVTIDLYG…LKKVEQYRLP (88 aa).

The protein belongs to the FKBP-type PPIase family. Tig subfamily.

The protein localises to the cytoplasm. The catalysed reaction is [protein]-peptidylproline (omega=180) = [protein]-peptidylproline (omega=0). Functionally, involved in protein export. Acts as a chaperone by maintaining the newly synthesized protein in an open conformation. Functions as a peptidyl-prolyl cis-trans isomerase. This is Trigger factor from Baumannia cicadellinicola subsp. Homalodisca coagulata.